The primary structure comprises 368 residues: Glutaminyl-peptide cyclotransferase (368 aa).

An N-terminal signal peptide occupies residues 1–23; sequence MAGERRDSKAAAFFCLAWALCLA. The N-linked (GlcNAc...) asparagine glycan is linked to N53. C143 and C169 are joined by a disulfide. D164 contributes to the Zn(2+) binding site. E207 acts as the Proton acceptor in catalysis. A Zn(2+)-binding site is contributed by E208. The active-site Proton acceptor is the D254. An N-linked (GlcNAc...) asparagine glycan is attached at N292. H336 is a Zn(2+) binding site. N-linked (GlcNAc...) asparagine glycosylation is present at N352.

It belongs to the glutaminyl-peptide cyclotransferase family. As to expression, expressed by the venom gland.

It is found in the secreted. It catalyses the reaction N-terminal L-glutaminyl-[peptide] = N-terminal 5-oxo-L-prolyl-[peptide] + NH4(+). Its function is as follows. Responsible for the biosynthesis of pyroglutamyl peptides. Has a bias against acidic and tryptophan residues adjacent to the N-terminal glutaminyl residue and a lack of importance of chain length after the second residue. Also catalyzes N-terminal pyroglutamate formation. The protein is Glutaminyl-peptide cyclotransferase (QPCT) of Boiga dendrophila (Mangrove snake).